The chain runs to 351 residues: Centromere-binding protein 1 (351 aa).

Met-1 carries the N-acetylmethionine modification. 3 stretches are compositionally biased toward polar residues: residues 1-10 (MNSLANNNKL), 43-52 (LLSQESNDGN), and 65-77 (KGTQSQYESGLTS). Disordered stretches follow at residues 1–164 (MNSL…TQQS), 196–233 (KKDISMQPGRRGRKPTTLATTDEWKKQRKDSHKEVERR), and 327–351 (YEDMHTHKKQENERKSTRSDNPHEA). Position 45 is a phosphoserine; by ATM or ATR (Ser-45). Ser-48 is modified (phosphoserine). Residue Ser-84 is modified to Phosphoserine. Polar residues-rich tracts occupy residues 100–124 (VNYTDLIQGQEDSSDAHTSNQTNAN) and 138–164 (TPSNEGVKPNTSLEGMTSSPMESTQQS). Thr-138 bears the Phosphothreonine mark. The bHLH domain occupies 222–270 (QRKDSHKEVERRRRENINTAINVLSDLLPVRESSKAAILACAAEYIQKL).

As to quaternary structure, binds DNA as a dimer. Associates with MET4 to form a heteromeric complex which also includes MET28.

Its subcellular location is the nucleus. It localises to the mitochondrion. The protein resides in the chromosome. It is found in the centromere. Functionally, required for chromosome stability and methionine prototrophy. It is involved in chromosomal segregation. Binds to a highly conserved DNA sequence (5'-RTCACRTG-3'), called CDEI, found in centromeres and in several promoters. DNA-binding activity is enhanced by MET28. Required as an auxiliary factor for transcriptional activation of sulfur metabolism together with MET4 and MET28. This chain is Centromere-binding protein 1 (CBF1), found in Saccharomyces cerevisiae (strain ATCC 204508 / S288c) (Baker's yeast).